Here is a 172-residue protein sequence, read N- to C-terminus: MGAILVVLALLSLLGLGSANLNPLDHDPCLDFDPENCTLTFAPDTSRLCGVLIKCGWDCRSVEITHNNKTWNNTLSTTWEPGVPQWYTVSVRGPDGSIRISNNTFIFSEMCDLAMFMSRQYDLWPPSKENIVAFSIAYCLVTCIITAIICVCIHLLIVIRPRQSNEEKEKMP.

An N-terminal signal peptide occupies residues 1 to 19; the sequence is MGAILVVLALLSLLGLGSA. Over 20–136 the chain is Lumenal; sequence NLNPLDHDPC…SKENIVAFSI (117 aa). Asn36 is a glycosylation site (N-linked (GlcNAc...) asparagine; by host). 2 disulfides stabilise this stretch: Cys37-Cys55 and Cys49-Cys111. 3 N-linked (GlcNAc...) asparagine; by host glycosylation sites follow: Asn68, Asn72, and Asn102. The chain crosses the membrane as a helical span at residues 137-157; that stretch reads AYCLVTCIITAIICVCIHLLI. Residues 158–172 are Cytoplasmic-facing; that stretch reads VIRPRQSNEEKEKMP. The Di-lysine motif motif lies at 168–172; the sequence is KEKMP.

Belongs to the adenoviridae E19 family. Post-translationally, both disulfide bonds are absolutely critical for the interaction with MHC antigens. N-glycosylated; high-mannose.

The protein resides in the host endoplasmic reticulum membrane. Functionally, binds and retains class I heavy chains in the endoplasmic reticulum during the early period of virus infection, thereby impairing their transport to the cell surface. Also delays the expression of class I alleles that it cannot affect by direct retention. Binds transporters associated with antigen processing (TAP) and acts as a tapasin inhibitor, preventing class I/TAP association. In consequence, infected cells are masked for immune recognition by cytotoxic T-lymphocytes. The protein is Early E3 18.5 kDa glycoprotein of Human adenovirus B serotype 3 (HAdV-3).